Consider the following 1146-residue polypeptide: Probable phospholipid-transporting ATPase IIB (1146 aa).

Residues 1–143 lie on the Cytoplasmic side of the membrane; sequence MADQIPLYPV…IKNQKYNVFT (143 aa). Residues 144-164 traverse the membrane as a helical segment; that stretch reads FIPGVLYEQFKFFLNLYFLVV. Residues 165–172 are Extracellular-facing; the sequence is SCSQFVPA. A helical transmembrane segment spans residues 173 to 193; that stretch reads LKIGYLYTYWAPLGFVLAVTI. Residues 194–381 are Cytoplasmic-facing; that stretch reads AREAIDEFRR…LDLELNQLTK (188 aa). A helical membrane pass occupies residues 382–402; it reads ALFLALVVLSVVMVTLQGFAG. Residues 403-407 are Extracellular-facing; the sequence is PWYRN. A helical membrane pass occupies residues 408–427; that stretch reads LFRFLLLFSYIIPISLRVNL. Residues 428 to 938 are Cytoplasmic-facing; it reads DMGKAAYGWM…ALGQFVMHRG (511 aa). Catalysis depends on Asp-467, which acts as the 4-aspartylphosphate intermediate. ATP contacts are provided by Asp-467, Lys-468, and Thr-469. Asp-467 provides a ligand contact to Mg(2+). Position 469 (Thr-469) interacts with Mg(2+). The segment covering 508–519 has biased composition (polar residues); it reads VHSQPSGHNPSS. A disordered region spans residues 508–535; that stretch reads VHSQPSGHNPSSAPLRRSQSSTPKVKKS. Glu-590, Phe-632, Lys-637, Lys-656, Arg-685, Thr-686, Thr-765, Gly-766, Asp-767, Arg-847, and Lys-853 together coordinate ATP. Position 873 (Asp-873) interacts with Mg(2+). ATP is bound by residues Asn-876 and Asp-877. Asp-877 contacts Mg(2+). A helical transmembrane segment spans residues 939-959; that stretch reads LIISTMQAVFSSVFYFASVPL. The Extracellular segment spans residues 960–961; it reads YQ. A helical transmembrane segment spans residues 962–982; the sequence is GFLMVGYATIYTMFPVFSLVL. Over 983-1011 the chain is Cytoplasmic; the sequence is DQDVKPEMAILYPELYKDLTKGRSLSFKT. A helical transmembrane segment spans residues 1012–1032; sequence FLIWVLISIYQGGILMYGALL. Over 1033 to 1040 the chain is Extracellular; the sequence is LFEDEFVH. Residues 1041–1061 traverse the membrane as a helical segment; it reads VVAISFTALILTELLMVALTI. Residues 1062-1065 lie on the Cytoplasmic side of the membrane; the sequence is RTWH. Residues 1066 to 1086 form a helical membrane-spanning segment; that stretch reads WLMVVAEFLSLGCYVASLAFL. The Extracellular portion of the chain corresponds to 1087–1105; the sequence is NEYFGIGRVSFGAFLDVAF. The helical transmembrane segment at 1106–1128 threads the bilayer; the sequence is ITTVTFLWKVSAITVVSCLPLYV. Residues 1129–1146 are Cytoplasmic-facing; sequence LKYLKRKLSPPSYSKLSS.

It belongs to the cation transport ATPase (P-type) (TC 3.A.3) family. Type IV subfamily. The cofactor is Mg(2+). Found in most tissues except spleen and muscle. Most abundant in testis. Also detected in fetal tissues.

The protein resides in the golgi apparatus. The protein localises to the trans-Golgi network membrane. The catalysed reaction is ATP + H2O + phospholipidSide 1 = ADP + phosphate + phospholipidSide 2.. This is Probable phospholipid-transporting ATPase IIB (Atp9b) from Mus musculus (Mouse).